A 368-amino-acid chain; its full sequence is 3-dehydroquinate synthase (368 aa).

NAD(+) contacts are provided by residues 71–76, 105–109, 129–130, lysine 142, lysine 151, and 169–172; these read DGEAFK, GVVGD, TT, and TLRT. Positions 184, 247, and 264 each coordinate Zn(2+).

This sequence belongs to the sugar phosphate cyclases superfamily. Dehydroquinate synthase family. Co(2+) serves as cofactor. Zn(2+) is required as a cofactor. Requires NAD(+) as cofactor.

The protein localises to the cytoplasm. The enzyme catalyses 7-phospho-2-dehydro-3-deoxy-D-arabino-heptonate = 3-dehydroquinate + phosphate. Its pathway is metabolic intermediate biosynthesis; chorismate biosynthesis; chorismate from D-erythrose 4-phosphate and phosphoenolpyruvate: step 2/7. In terms of biological role, catalyzes the conversion of 3-deoxy-D-arabino-heptulosonate 7-phosphate (DAHP) to dehydroquinate (DHQ). The sequence is that of 3-dehydroquinate synthase from Cupriavidus taiwanensis (strain DSM 17343 / BCRC 17206 / CCUG 44338 / CIP 107171 / LMG 19424 / R1) (Ralstonia taiwanensis (strain LMG 19424)).